Here is a 716-residue protein sequence, read N- to C-terminus: Protein C-mannosyl-transferase DPY19L3 (716 aa).

Topologically, residues M1–K43 are cytoplasmic. Residues I44 to Y64 traverse the membrane as a helical segment. Residues L65–E154 are Lumenal-facing. N118 carries N-linked (GlcNAc...) asparagine glycosylation. The chain crosses the membrane as a helical span at residues P155–S182. At G183–T184 the chain is on the cytoplasmic side. Positions W185–T197 form an intramembrane region, name=3. Topologically, residues N198–W215 are cytoplasmic. Residues A216–F230 constitute an intramembrane region (name=4). The Cytoplasmic portion of the chain corresponds to L231–S239. The chain crosses the membrane as a helical span at residues E240 to L256. The Lumenal segment spans residues T257–Q262. A helical membrane pass occupies residues F263–D279. Residues M280–L289 lie on the Cytoplasmic side of the membrane. Residues Y290–F306 traverse the membrane as a helical segment. The Lumenal portion of the chain corresponds to N307–S308. Residues M309–F323 traverse the membrane as a helical segment. Topologically, residues I324 to L338 are cytoplasmic. Residues N339–N359 form a helical membrane-spanning segment. Residues N360–D414 are Lumenal-facing. The chain crosses the membrane as a helical span at residues T415–F437. The Cytoplasmic portion of the chain corresponds to H438–Y465. The chain crosses the membrane as a helical span at residues N466–Y485. The Lumenal portion of the chain corresponds to L486 to W487. Residues T488–L499 traverse the membrane as a helical segment. Over C500–I522 the chain is Cytoplasmic. A helical transmembrane segment spans residues M523–F539. Topologically, residues W540–K716 are lumenal. The N-linked (GlcNAc...) asparagine glycan is linked to N704.

The protein belongs to the dpy-19 family. In terms of tissue distribution, widely expressed.

The protein localises to the endoplasmic reticulum membrane. The enzyme catalyses L-tryptophyl-[protein] + a di-trans,poly-cis-dolichyl beta-D-mannosyl phosphate = C-alpha-D-mannosyl-L-tryptophyl-[protein] + a di-trans,poly-cis-dolichyl phosphate + H(+). It functions in the pathway protein modification; protein glycosylation. Its function is as follows. C-mannosyltransferase that mediates C-mannosylation of tryptophan residues on target proteins. The reaction occurs on the luminal side of the endoplasmic reticulum and involves the transfer of a mannose unit from a dolichylphosphate mannose (Dol-P-Man) donor to an acceptor protein containing a WxxW or WxxC consensus sequence. C-mannosylates RSPO1, a Wnt signaling regulator, preferentially at the first Trp residue in the sequence WxxW. C-mannosylates the netrin receptor UNC5A, preferentially at the third tryptophan of WxxWxxWxxC sequence. In terms of biological role, has no C-mannosyltransferase activity. The sequence is that of Protein C-mannosyl-transferase DPY19L3 (DPY19L3) from Homo sapiens (Human).